The sequence spans 1098 residues: Protein diaphanous homolog 2 (1098 aa).

An N-acetylmethionine modification is found at Met1. The tract at residues 1–62 (MEELGAAASG…SFRKSATKRE (62 aa)) is disordered. A compositionally biased stretch (basic and acidic residues) spans 36 to 52 (ANEEETRNKPKLRDRIT). The 374-residue stretch at 90 to 463 (SLILSEKEVL…QIVLHCSGMD (374 aa)) folds into the GBD/FH3 domain. Coiled-coil stretches lie at residues 375-416 (QLRV…NMLK) and 490-539 (EENE…GQGV). Disordered regions lie at residues 537-565 (QGVP…PPPP), 578-611 (PPPP…GVFP), 679-699 (MKGQ…PKKK), 1007-1047 (HKRK…NKEG), and 1063-1098 (GAAF…MSSK). Composition is skewed to pro residues over residues 543–565 (IPGP…PPPP) and 578–608 (PPPP…PPGG). The 77-residue stretch at 544–620 (PGPPPPPPLP…PLLSGPIELP (77 aa)) folds into the FH1 domain. One can recognise an FH2 domain in the interval 625-1025 (QKKLYKPDIP…SRRAKLAKEK (401 aa)). A coiled-coil region spans residues 999–1050 (FLEALKENHKRKEMEEKSRRAKLAKEKAEQEKLERQKKKKQLIDINKEGDET). Basic and acidic residues-rich tracts occupy residues 1007-1032 (HKRK…EKLE) and 1075-1087 (RNPD…LERS). A DAD domain is found at 1048–1078 (DETGVMDNLLEALQSGAAFRDRRKRIPRNPD).

It belongs to the formin homology family. Diaphanous subfamily. In terms of assembly, interacts with MAPRE1 and APC.

Functionally, may be involved in oogenesis. The polypeptide is Protein diaphanous homolog 2 (Diaph2) (Mus musculus (Mouse)).